A 368-amino-acid chain; its full sequence is CST complex subunit STN1 (368 aa).

An interaction with CTC1 region spans residues 2-192 (AVSLGDDDAD…KCYDQPFKMP (191 aa)). Positions 58-162 (VDVLGIVVYK…EIKATSFYKV (105 aa)) form a DNA-binding region, OB. Winged helix-turn-helix (wHTH) regions lie at residues 201 to 295 (AGGS…NVTE) and 296 to 368 (QDKD…YIVL).

This sequence belongs to the CTC1 family. As to quaternary structure, component of the CST complex.

Its subcellular location is the nucleus. It localises to the chromosome. The protein localises to the telomere. Its function is as follows. Component of the CST complex proposed to act as a specialized replication factor promoting DNA replication under conditions of replication stress or natural replication barriers such as the telomere duplex. The CST complex binds single-stranded DNA with high affinity in a sequence-independent manner, while isolated subunits bind DNA with low affinity by themselves. Initially the CST complex has been proposed to protect telomeres from DNA degradation. However, the CST complex has been shown to be involved in several aspects of telomere replication. This Danio rerio (Zebrafish) protein is CST complex subunit STN1.